The following is a 64-amino-acid chain: Chassatide C7 (64 aa).

Residues 1 to 35 constitute a propeptide, removed in mature form; it reads VLVASLVMLEAQSSDTIQVPDWGKRLLMNHDSNRV. Disulfide bonds link cysteine 39–cysteine 55, cysteine 43–cysteine 57, and cysteine 48–cysteine 62.

As to expression, expressed in fruit, pedicel, root and stem but not in leaf (at protein level).

Functionally, probably participates in a plant defense mechanism. Active against E.coli ATTC25922 but not against S.aureus ATCC 12600 or S.epidermidis ATCC 14990. Has cytotoxic and hemolytic activity. In Chassalia chartacea (Chassalia curviflora), this protein is Chassatide C7.